Here is a 348-residue protein sequence, read N- to C-terminus: MSVDQEKLKALNEALGKIEKDFGKGSVMKLGEATSMSIDVISTGAIGLDIAIGIGGLPRGRIVEVYGPESSGKTTVALSCVASAQKDGGIAAFIDAEHALDPVYAKALGVDVDNLIISQPDTGEQALEIAEALIRSGAIDIIVIDSVAALVPKAEIDGDMGDSHVGLQARLMSQALRKLTGSIKKSNCVAIFINQLREKVGIMFGNPETTTGGRALKFYSSVRLDVRKIDTIKQGDKVIGSRTRVKVVKNKVAPPFKQAEFDIMYGEGISKIGDLLDIAADVDIVKKSGSWYSYNDTKLGQGRENVKKFLEDNLDLTTEIDEKVRAFYNLNEEHEESGTSVSKEIVEE.

67–74 (GPESSGKT) is an ATP binding site.

It belongs to the RecA family.

The protein resides in the cytoplasm. In terms of biological role, can catalyze the hydrolysis of ATP in the presence of single-stranded DNA, the ATP-dependent uptake of single-stranded DNA by duplex DNA, and the ATP-dependent hybridization of homologous single-stranded DNAs. It interacts with LexA causing its activation and leading to its autocatalytic cleavage. The polypeptide is Protein RecA (Clostridioides difficile (strain 630) (Peptoclostridium difficile)).